Consider the following 415-residue polypeptide: MKFRTLLIIFSLVFLLEIVSASEPQCGRDAGGALCHGNLCCSHWGFCGTTAIYCDVDQGCQSQCWSSPPPPSPPPPPPSPPPPSPPPPSPPPPSPPPPSPPPPSPPPPSPPPPSPPPPGGPERPDHRCGRALGNPPCNPGRCCSIHNWCGSTAAYCRGSSCQYQCWNSLLSALISNGNNAISKIISKSVFDEMFKHMKDCPSKGFYSYDAFIIATTSFPHFGTTGDITTRKRELAAFFAQTSLATTGQRFDSQDLYVWGYCHINETTNGNDNDYCTSAHWPCPSGKKYNSRGAVQLTHNYNYGLAGEALGLDLINNPDLVATDPVISFKTAIWFWMAQHDNKLSCHDILINANSGYVIGNIIKNSGYQNGLITNTISTMRGIGYYKRYCDMLGVSYGDNLDSWYDQTHFSEVARM.

An N-terminal signal peptide occupies residues 1–21 (MKFRTLLIIFSLVFLLEIVSA). The 44-residue stretch at 23–66 (EPQCGRDAGGALCHGNLCCSHWGFCGTTAIYCDVDQGCQSQCWS) folds into the Chitin-binding type-1 1 domain. Intrachain disulfides connect C26–C41, C35–C47, C40–C54, and C60–C64. Positions 65–127 (WSSPPPPSPP…PGGPERPDHR (63 aa)) are disordered. Residues 67-121 (SPPPPSPPPPPPSPPPPSPPPPSPPPPSPPPPSPPPPSPPPPSPPPPSPPPPGGP) show a composition bias toward pro residues. One can recognise a Chitin-binding type-1 2 domain in the interval 125 to 167 (DHRCGRALGNPPCNPGRCCSIHNWCGSTAAYCRGSSCQYQCWN). Disulfide bonds link C128-C143, C137-C149, C142-C156, and C161-C165. N264 carries an N-linked (GlcNAc...) asparagine glycan.

In terms of processing, glycosylated.

Its subcellular location is the secreted. In terms of biological role, chitin-binding protein which slows larval growth when consumed by the lepidopteran species S.ricini and M.brassica, but not when consumed by the mulberry specialist B.mori. Lacks chitinase activity. This chain is Mulatexin, found in Morus alba (White mulberry).